We begin with the raw amino-acid sequence, 308 residues long: GTP cyclohydrolase FolE2 (308 aa).

The protein belongs to the GTP cyclohydrolase IV family.

It catalyses the reaction GTP + H2O = 7,8-dihydroneopterin 3'-triphosphate + formate + H(+). It participates in cofactor biosynthesis; 7,8-dihydroneopterin triphosphate biosynthesis; 7,8-dihydroneopterin triphosphate from GTP: step 1/1. Functionally, converts GTP to 7,8-dihydroneopterin triphosphate. This Idiomarina loihiensis (strain ATCC BAA-735 / DSM 15497 / L2-TR) protein is GTP cyclohydrolase FolE2.